The primary structure comprises 470 residues: Sorting nexin-17 (470 aa).

The PX domain maps to 1–109 (MHFSIPETES…SFLRRAQQET (109 aa)). Arg-36, Ser-38, Lys-62, and Arg-75 together coordinate a 1,2-diacyl-sn-glycero-3-phospho-(1D-myo-inositol-3-phosphate). One can recognise a Ras-associating domain in the interval 115–206 (EEVSLEVLLS…YKIVLRKSYW (92 aa)). The interval 115–432 (EEVSLEVLLS…DASRESMVKL (318 aa)) is FERM-like. The segment at 270–432 (GYLRFDACVA…DASRESMVKL (163 aa)) is PTB-like F3 module. Positions 401 to 425 (GGNLRRSDSQQAVKSPPLLESPDAS) are disordered. Residues Ser-407, Ser-409, Ser-415, Ser-421, Ser-437, and Ser-440 each carry the phosphoserine modification.

Belongs to the sorting nexin family. Monomer. Interacts with APP (via cytoplasmic YXNPXY motif). Interacts with KIF1B. Interacts with the C-termini of P-selectin, PTC, LDLR, VLDLR, LRP1 and LRP8. Interacts with KRIT1 (via N-terminus). Interacts with HRAS. Interacts with ITGB1 and ITGB5 (via NPxY motif). Interacts with CCDC22 and CCDC93; the interaction associates SNX17 with the CCC complex. Interacts (via C-terminus) with VPS26C and VPS35L; the interactions are direct and associate SNX17 with the retriever complex.

Its subcellular location is the cytoplasm. The protein localises to the early endosome. It is found in the cytoplasmic vesicle membrane. In terms of biological role, critical regulator of endosomal recycling of numerous surface proteins, including integrins, signaling receptor and channels. Binds to NPxY sequences in the cytoplasmic tails of target cargos. Associates with retriever and CCC complexes to prevent lysosomal degradation and promote cell surface recycling of numerous cargos such as integrins ITGB1, ITGB5 and their associated alpha subunits. Also required for maintenance of normal cell surface levels of APP and LRP1. Interacts with membranes containing phosphatidylinositol 3-phosphate (PtdIns(3P)). This Rattus norvegicus (Rat) protein is Sorting nexin-17 (Snx17).